The sequence spans 417 residues: Glutamate-1-semialdehyde 2,1-aminomutase (417 aa).

An N6-(pyridoxal phosphate)lysine modification is found at Lys263.

The protein belongs to the class-III pyridoxal-phosphate-dependent aminotransferase family. HemL subfamily. Requires pyridoxal 5'-phosphate as cofactor.

The protein resides in the cytoplasm. It catalyses the reaction (S)-4-amino-5-oxopentanoate = 5-aminolevulinate. Its pathway is porphyrin-containing compound metabolism; protoporphyrin-IX biosynthesis; 5-aminolevulinate from L-glutamyl-tRNA(Glu): step 2/2. This is Glutamate-1-semialdehyde 2,1-aminomutase from Methanospirillum hungatei JF-1 (strain ATCC 27890 / DSM 864 / NBRC 100397 / JF-1).